The sequence spans 118 residues: Basic phospholipase A2 CM-III (118 aa).

Cystine bridges form between Cys11–Cys70, Cys26–Cys117, Cys28–Cys44, Cys43–Cys98, Cys50–Cys91, Cys59–Cys84, and Cys77–Cys89. 3 residues coordinate Ca(2+): Tyr27, Gly29, and Gly31. His47 is an active-site residue. Asp48 serves as a coordination point for Ca(2+). The short motif at 52 to 69 (EKAGKMGCWPYFTLYKYK) is the Coagulation factor Xa binding motif element. Asp92 is an active-site residue.

The protein belongs to the phospholipase A2 family. Group I subfamily. D49 sub-subfamily. Ca(2+) serves as cofactor. In terms of tissue distribution, expressed by the venom gland.

It localises to the secreted. The catalysed reaction is a 1,2-diacyl-sn-glycero-3-phosphocholine + H2O = a 1-acyl-sn-glycero-3-phosphocholine + a fatty acid + H(+). Functionally, snake venom phospholipase A2 (PLA2) that shows several activities. It shows strong anticoagulant activity, probably by binding to coagulation factor Xa (F10) and inhibiting the formation of the prothrombinase complex, shows direct hemolytic action, causes neuromuscular blockade with a gradual contracture and a decreased sensitivity to ACh and KCl, abolishes twitches evoked by indirect stimulation earlier than those by direct stimulation (in the mouse phrenic nerve-diaphragm preparation), and causes myonecrosis when injected intramuscularly. PLA2 catalyzes the calcium-dependent hydrolysis of the 2-acyl groups in 3-sn-phosphoglycerides. This is Basic phospholipase A2 CM-III from Naja mossambica (Mozambique spitting cobra).